The following is a 225-amino-acid chain: Vacuolar protein sorting-associated protein 2 homolog 1 (225 aa).

Residues 13 to 54 (AELLRENKRMLDKSIREIERERQGLQTQEKKLINEIKKTAKQ) adopt a coiled-coil conformation.

It belongs to the SNF7 family. As to quaternary structure, component of the endosomal sorting required for transport complex III (ESCRT-III), composed at least of VPS2, VPS20, VPS24 and VPS32. Interacts with SKD1.

It localises to the endosome. Its function is as follows. Component of the ESCRT-III complex, which is required for multivesicular bodies (MVBs) formation and sorting of endosomal cargo proteins into MVBs. The ESCRT-III complex is probably involved in the concentration of MVB cargo. The polypeptide is Vacuolar protein sorting-associated protein 2 homolog 1 (VPS2.1) (Arabidopsis thaliana (Mouse-ear cress)).